Reading from the N-terminus, the 152-residue chain is Transcriptional regulator MraZ (152 aa).

SpoVT-AbrB domains follow at residues 5–52 (ATLV…TLPE) and 81–124 (ASEC…DEQV).

This sequence belongs to the MraZ family. In terms of assembly, forms oligomers.

The protein resides in the cytoplasm. It is found in the nucleoid. In terms of biological role, negatively regulates its own expression and that of the subsequent genes in the proximal part of the division and cell wall (dcw) gene cluster. Acts by binding directly to DNA. May also regulate the expression of genes outside the dcw cluster. This is Transcriptional regulator MraZ from Proteus mirabilis (strain HI4320).